The chain runs to 377 residues: Succinyl-diaminopimelate desuccinylase (377 aa).

His-67 is a Zn(2+) binding site. Asp-69 is an active-site residue. Asp-100 provides a ligand contact to Zn(2+). The active-site Proton acceptor is the Glu-134. Residues Glu-135, Glu-163, and His-349 each coordinate Zn(2+).

It belongs to the peptidase M20A family. DapE subfamily. In terms of assembly, homodimer. The cofactor is Zn(2+). Co(2+) is required as a cofactor.

The enzyme catalyses N-succinyl-(2S,6S)-2,6-diaminopimelate + H2O = (2S,6S)-2,6-diaminopimelate + succinate. The protein operates within amino-acid biosynthesis; L-lysine biosynthesis via DAP pathway; LL-2,6-diaminopimelate from (S)-tetrahydrodipicolinate (succinylase route): step 3/3. Catalyzes the hydrolysis of N-succinyl-L,L-diaminopimelic acid (SDAP), forming succinate and LL-2,6-diaminopimelate (DAP), an intermediate involved in the bacterial biosynthesis of lysine and meso-diaminopimelic acid, an essential component of bacterial cell walls. The sequence is that of Succinyl-diaminopimelate desuccinylase from Shewanella frigidimarina (strain NCIMB 400).